The chain runs to 124 residues: Glycine cleavage system H protein (124 aa).

The Lipoyl-binding domain maps to 24 to 106 (TYTMGITDHA…YDDGWLVKFK (83 aa)). At Lys65 the chain carries N6-lipoyllysine.

This sequence belongs to the GcvH family. The glycine cleavage system is composed of four proteins: P, T, L and H. It depends on (R)-lipoate as a cofactor.

The glycine cleavage system catalyzes the degradation of glycine. The H protein shuttles the methylamine group of glycine from the P protein to the T protein. This is Glycine cleavage system H protein from Ruthia magnifica subsp. Calyptogena magnifica.